Here is a 201-residue protein sequence, read N- to C-terminus: Small ribosomal subunit protein uS4c (201 aa).

The segment at 15-43 (LGALPGLTSKRPRSGSDLRNQSRSGKRSQ) is disordered. Positions 89–150 (MRLDNILFRL…KERSRALIQN (62 aa)) constitute an S4 RNA-binding domain.

It belongs to the universal ribosomal protein uS4 family. As to quaternary structure, part of the 30S ribosomal subunit. Contacts protein S5. The interaction surface between S4 and S5 is involved in control of translational fidelity.

Its subcellular location is the plastid. It is found in the chloroplast. Functionally, one of the primary rRNA binding proteins, it binds directly to 16S rRNA where it nucleates assembly of the body of the 30S subunit. With S5 and S12 plays an important role in translational accuracy. In Amborella trichopoda, this protein is Small ribosomal subunit protein uS4c (rps4).